The following is a 335-amino-acid chain: GTPase Obg (335 aa).

The Obg domain occupies 1-159 (MKFVDSAKIS…IELEMELKLM (159 aa)). An OBG-type G domain is found at 160-323 (ADVGLVGFPN…LKDELWRQIS (164 aa)). GTP is bound by residues 166 to 173 (GFPNAGKS), 191 to 195 (FTTLV), 213 to 216 (DIPG), 280 to 283 (TKMD), and 304 to 306 (SSV). Positions 173 and 193 each coordinate Mg(2+).

Belongs to the TRAFAC class OBG-HflX-like GTPase superfamily. OBG GTPase family. In terms of assembly, monomer. Requires Mg(2+) as cofactor.

The protein localises to the cytoplasm. Its function is as follows. An essential GTPase which binds GTP, GDP and possibly (p)ppGpp with moderate affinity, with high nucleotide exchange rates and a fairly low GTP hydrolysis rate. Plays a role in control of the cell cycle, stress response, ribosome biogenesis and in those bacteria that undergo differentiation, in morphogenesis control. This is GTPase Obg from Chlorobaculum parvum (strain DSM 263 / NCIMB 8327) (Chlorobium vibrioforme subsp. thiosulfatophilum).